Consider the following 105-residue polypeptide: Protein METHYLENE BLUE SENSITIVITY 1 (105 aa).

The disordered stretch occupies residues 26–46; the sequence is RGGGKAGIADRTGKEKGGHAK. The segment covering 36–46 has biased composition (basic and acidic residues); it reads RTGKEKGGHAK.

As to expression, mainly expressed in the epidermis.

The protein resides in the nucleus. Its subcellular location is the cytoplasm. The protein localises to the stress granule. Functionally, required for acclimation to reactive oxygen species (ROS) responses downstream of beta-cyclocitral (beta-cc) or mediated by dihydroactinidiolide, including singlet oxygen 1O(2) detoxification reactions, especially upon light-mediated photooxidative stress, and leading to programmed cell death. Prevents leaf senescence. Involved in cold acclimation. The sequence is that of Protein METHYLENE BLUE SENSITIVITY 1 from Arabidopsis thaliana (Mouse-ear cress).